Consider the following 272-residue polypeptide: Diaminopimelate epimerase (272 aa).

Residues Asn11 and Asn60 each contribute to the substrate site. Cys69 functions as the Proton donor in the catalytic mechanism. Residues Gly70–Asn71, Asn181, and Glu199–Arg200 contribute to the substrate site. Cys209 (proton acceptor) is an active-site residue. Gly210–Thr211 contributes to the substrate binding site.

It belongs to the diaminopimelate epimerase family. In terms of assembly, homodimer.

The protein localises to the cytoplasm. The catalysed reaction is (2S,6S)-2,6-diaminopimelate = meso-2,6-diaminopimelate. Its pathway is amino-acid biosynthesis; L-lysine biosynthesis via DAP pathway; DL-2,6-diaminopimelate from LL-2,6-diaminopimelate: step 1/1. Catalyzes the stereoinversion of LL-2,6-diaminopimelate (L,L-DAP) to meso-diaminopimelate (meso-DAP), a precursor of L-lysine and an essential component of the bacterial peptidoglycan. The polypeptide is Diaminopimelate epimerase (Helicobacter pylori (strain P12)).